A 310-amino-acid polypeptide reads, in one-letter code: Malate dehydrogenase (310 aa).

Residues 7–13 and aspartate 34 contribute to the NAD(+) site; that span reads GAAGGIG. Residues arginine 81 and arginine 87 each coordinate substrate. NAD(+) contacts are provided by residues asparagine 94 and 117 to 119; that span reads ITN. The substrate site is built by asparagine 119 and arginine 153. Histidine 177 serves as the catalytic Proton acceptor. Position 227 (methionine 227) interacts with NAD(+).

This sequence belongs to the LDH/MDH superfamily. MDH type 1 family. As to quaternary structure, homodimer.

It catalyses the reaction (S)-malate + NAD(+) = oxaloacetate + NADH + H(+). Catalyzes the reversible oxidation of malate to oxaloacetate. The protein is Malate dehydrogenase of Idiomarina loihiensis (strain ATCC BAA-735 / DSM 15497 / L2-TR).